A 25-amino-acid polypeptide reads, in one-letter code: Small ribosomal subunit protein eS32B (25 aa).

A disordered region spans residues 1–25 (MRAKWRKKRTRRLKRKRRKVRARSK).

The protein belongs to the eukaryotic ribosomal protein eS32 family. Component of the small ribosomal subunit (SSU). Mature yeast ribosomes consist of a small (40S) and a large (60S) subunit. The 40S small subunit contains 1 molecule of ribosomal RNA (18S rRNA) and 33 different proteins (encoded by 57 genes). The large 60S subunit contains 3 rRNA molecules (25S, 5.8S and 5S rRNA) and 46 different proteins (encoded by 81 genes).

Its subcellular location is the cytoplasm. Its function is as follows. Component of the ribosome, a large ribonucleoprotein complex responsible for the synthesis of proteins in the cell. The small ribosomal subunit (SSU) binds messenger RNAs (mRNAs) and translates the encoded message by selecting cognate aminoacyl-transfer RNA (tRNA) molecules. The large subunit (LSU) contains the ribosomal catalytic site termed the peptidyl transferase center (PTC), which catalyzes the formation of peptide bonds, thereby polymerizing the amino acids delivered by tRNAs into a polypeptide chain. The nascent polypeptides leave the ribosome through a tunnel in the LSU and interact with protein factors that function in enzymatic processing, targeting, and the membrane insertion of nascent chains at the exit of the ribosomal tunnel. The polypeptide is Small ribosomal subunit protein eS32B (Saccharomyces cerevisiae (strain ATCC 204508 / S288c) (Baker's yeast)).